Here is a 356-residue protein sequence, read N- to C-terminus: Cytochrome c oxidase subunit 2 (356 aa).

Positions 1-23 are cleaved as a signal peptide; sequence MNKGLCNWRLFSLFGMMALLLAG. The interval 24 to 259 is cytochrome c oxidase subunit II; it reads CGKPFLSTLQ…QNAKKPVVTD (236 aa). 2 consecutive transmembrane segments (helical) span residues 45 to 65 and 93 to 113; these read LMLL…IIFV and IIWT…TVLT. Residues His-178, Cys-219, Cys-223, and His-227 each coordinate Cu cation. The Cytochrome c domain occupies 260-356; the sequence is PVAKEGEAIF…TKYLMSLKVE (97 aa). Cys-273, Cys-276, His-277, and Met-331 together coordinate heme c.

It belongs to the cytochrome c oxidase subunit 2 family. Requires Cu cation as cofactor. The cofactor is heme c.

The protein localises to the cell membrane. The catalysed reaction is 4 Fe(II)-[cytochrome c] + O2 + 8 H(+)(in) = 4 Fe(III)-[cytochrome c] + 2 H2O + 4 H(+)(out). In terms of biological role, subunits I and II form the functional core of the enzyme complex. Electrons originating in cytochrome c are transferred via heme a and Cu(A) to the binuclear center formed by heme a3 and Cu(B). In Bacillus sp. (strain PS3), this protein is Cytochrome c oxidase subunit 2 (ctaC).